A 316-amino-acid polypeptide reads, in one-letter code: Probable cell division protein WhiA (316 aa).

The segment at residues 276–309 (SLEELGKIAEPQITKDAIAGRIRRLLQLAEKTEK) is a DNA-binding region (H-T-H motif).

It belongs to the WhiA family.

In terms of biological role, involved in cell division and chromosome segregation. The protein is Probable cell division protein WhiA of Bifidobacterium longum subsp. infantis (strain ATCC 15697 / DSM 20088 / JCM 1222 / NCTC 11817 / S12).